The chain runs to 235 residues: Transmembrane protein 215 (235 aa).

2 consecutive transmembrane segments (helical) span residues 12–32 (LVVA…VSGM) and 40–60 (IPLL…IALA). The interval 99–145 (SDLESGKGSSDELAKKAGLRGKPPPQSQGEVSVASSINSPTPTEEGE) is disordered. Positions 125–140 (SQGEVSVASSINSPTP) are enriched in polar residues.

Its subcellular location is the membrane. This is Transmembrane protein 215 (TMEM215) from Homo sapiens (Human).